The sequence spans 425 residues: MIDIKLIRQNPDFVKEALRKRGEDPAVIDEILKIDADWRATITKTNELRSRRNEISKNVARLKKEGKNAEAEALIEEGKRLGEEIKALEEKEKELQEKLNYLLLMVPNIPHESVPVGEDESQNVEVRRWGEPREFDFTPLAHWDLGPAWGLMDFSRASKLSGSRFTVMYGKLARLERALINFMLDVHTKEHGYTEVWVPHLVKRETITITGQLPKFEEELYLAERDDLFLIPTAEVPLAALHSGEILEEKELPKKYVAYTPCYRREAGSYGKDVRGMIRQHQFDKVELVWVTTPKRSFEDLEQLVKDAETILQKLELPYRVVSLCTGDLGFTSAKTYDIEVWLPSYNAYKEISSCSNVTDFQARRGNMRYRRRSDGKLEYVHTLNGSGIAVGRALVAILENYQQPDGSVRVPEVLVPYTGFEVIP.

233–235 serves as a coordination point for L-serine; that stretch reads TAE. 264–266 provides a ligand contact to ATP; that stretch reads RRE. An L-serine-binding site is contributed by Glu-287. Position 351-354 (351-354) interacts with ATP; sequence EISS. Ser-387 provides a ligand contact to L-serine.

This sequence belongs to the class-II aminoacyl-tRNA synthetase family. Type-1 seryl-tRNA synthetase subfamily. As to quaternary structure, homodimer. The tRNA molecule binds across the dimer.

It is found in the cytoplasm. The enzyme catalyses tRNA(Ser) + L-serine + ATP = L-seryl-tRNA(Ser) + AMP + diphosphate + H(+). It carries out the reaction tRNA(Sec) + L-serine + ATP = L-seryl-tRNA(Sec) + AMP + diphosphate + H(+). It functions in the pathway aminoacyl-tRNA biosynthesis; selenocysteinyl-tRNA(Sec) biosynthesis; L-seryl-tRNA(Sec) from L-serine and tRNA(Sec): step 1/1. Functionally, catalyzes the attachment of serine to tRNA(Ser). Is also able to aminoacylate tRNA(Sec) with serine, to form the misacylated tRNA L-seryl-tRNA(Sec), which will be further converted into selenocysteinyl-tRNA(Sec). The sequence is that of Serine--tRNA ligase from Thermotoga sp. (strain RQ2).